Reading from the N-terminus, the 257-residue chain is Spindlin-2C (257 aa).

The disordered stretch occupies residues 1–47 (MKTPHKKGAAKEQMGEGVGHHIGSTTIKKKKASQKRQRSRSSSRRSI). Over residues 27–43 (IKKKKASQKRQRSRSSS) the composition is skewed to basic residues. 3 tudor-like domain regions span residues 48–97 (VGCR…LELH), 127–176 (IGKA…YQLL), and 208–253 (IGKH…YDLV). 2 histone H3K4me3 and H3R8me2a binding regions span residues Glu-136 and 244–246 (DFH).

This sequence belongs to the SPIN/STSY family. As to quaternary structure, interacts with C11orf84/SPINDOC.

Its subcellular location is the nucleus. Functionally, may be involved in the regulation of cell cycle progression. Exhibits H3K4me3-binding activity. This Mus musculus (Mouse) protein is Spindlin-2C (Spin2c).